Here is a 367-residue protein sequence, read N- to C-terminus: 2-aminoethylphosphonate--pyruvate transaminase (367 aa).

Residue K193 is modified to N6-(pyridoxal phosphate)lysine.

It belongs to the class-V pyridoxal-phosphate-dependent aminotransferase family. PhnW subfamily. In terms of assembly, homodimer. Requires pyridoxal 5'-phosphate as cofactor.

The catalysed reaction is (2-aminoethyl)phosphonate + pyruvate = phosphonoacetaldehyde + L-alanine. Involved in phosphonate degradation. The sequence is that of 2-aminoethylphosphonate--pyruvate transaminase from Vibrio vulnificus (strain YJ016).